We begin with the raw amino-acid sequence, 151 residues long: UPF0336 protein Franean1_6066 (151 aa).

A MaoC-like domain is found at 8 to 127; it reads VGRSYTSDVP…NEVLVTSYEF (120 aa).

The protein belongs to the UPF0336 family.

The sequence is that of UPF0336 protein Franean1_6066 from Parafrankia sp. (strain EAN1pec).